The primary structure comprises 1159 residues: DNA-directed RNA polymerase subunit beta (1159 aa).

The protein belongs to the RNA polymerase beta chain family. As to quaternary structure, the RNAP catalytic core consists of 2 alpha, 1 beta, 1 beta' and 1 omega subunit. When a sigma factor is associated with the core the holoenzyme is formed, which can initiate transcription.

The catalysed reaction is RNA(n) + a ribonucleoside 5'-triphosphate = RNA(n+1) + diphosphate. Functionally, DNA-dependent RNA polymerase catalyzes the transcription of DNA into RNA using the four ribonucleoside triphosphates as substrates. The chain is DNA-directed RNA polymerase subunit beta from Deinococcus radiodurans (strain ATCC 13939 / DSM 20539 / JCM 16871 / CCUG 27074 / LMG 4051 / NBRC 15346 / NCIMB 9279 / VKM B-1422 / R1).